Reading from the N-terminus, the 620-residue chain is Glutathione-regulated potassium-efflux system protein KefC (620 aa).

The Periplasmic portion of the chain corresponds to 1-3 (MDS). The chain crosses the membrane as a helical span at residues 4–24 (HTLIQALIYLGSAALIVPIAV). Arg25 is a topological domain (cytoplasmic). A helical membrane pass occupies residues 26 to 46 (LGLGSVLGYLIAGCIIGPWGL). Residues 47–53 (RLVTDAE) are Periplasmic-facing. A helical membrane pass occupies residues 54 to 74 (SILHFAEIGVVLMLFIIGLEL). At 75–89 (DPQRLWKLRAAVFGG) the chain is on the cytoplasmic side. A helical transmembrane segment spans residues 90–110 (GALQMVICGGLLGLFCMLLGL). Over 111–113 (RWQ) the chain is Periplasmic. Residues 114–134 (VAELIGMTLALSSTAIAMQAM) traverse the membrane as a helical segment. Residues 135–148 (NERNLMVTQMGRSA) lie on the Cytoplasmic side of the membrane. The helical transmembrane segment at 149 to 169 (FAVLLFQDIAAIPLVAMIPLL) threads the bilayer. Topologically, residues 170-177 (AASSASTT) are periplasmic. The helical transmembrane segment at 178–198 (MGAFVLSALKVAGALALVVLL) threads the bilayer. Over 199-213 (GRYVTRPALRFVARS) the chain is Cytoplasmic. The helical transmembrane segment at 214–233 (GLREVFSAVALFLVFGFGLL) threads the bilayer. Over 234-236 (LEE) the chain is Periplasmic. The chain crosses the membrane as a helical span at residues 237-254 (VGLSMAMGAFLAGVLLAS). Residues 255-269 (SEYRHALESDIEPFK) lie on the Cytoplasmic side of the membrane. The chain crosses the membrane as a helical span at residues 270–290 (GLLLGLFFIGVGMSIDFGTLL). At 291–293 (ENP) the chain is on the periplasmic side. A helical transmembrane segment spans residues 294-314 (LRIVILLLGFLIIKIAMLWLI). Residues 315–326 (ARPLQVPNKQRR) are Cytoplasmic-facing. Residues 327-347 (WFAVLLGQGSEFAFVVFGAAQ) traverse the membrane as a helical segment. Residues 348 to 358 (MANVLEPEWAK) are Periplasmic-facing. A helical transmembrane segment spans residues 359–379 (SLTLAVALSMAATPILLVILN). At 380–620 (RLEQSSTEEA…ADEPETKPSS (241 aa)) the chain is on the cytoplasmic side. The 120-residue stretch at 399-518 (QPRVIIAGFG…AGVEKPERET (120 aa)) folds into the RCK N-terminal domain. The interval 597–620 (GWQGTEEGKHTGNMADEPETKPSS) is disordered.

Belongs to the monovalent cation:proton antiporter 2 (CPA2) transporter (TC 2.A.37) family. KefC subfamily. Homodimer. Interacts with the regulatory subunit KefF.

Its subcellular location is the cell inner membrane. In terms of biological role, pore-forming subunit of a potassium efflux system that confers protection against electrophiles. Catalyzes K(+)/H(+) antiport. This chain is Glutathione-regulated potassium-efflux system protein KefC, found in Escherichia coli O6:H1 (strain CFT073 / ATCC 700928 / UPEC).